The primary structure comprises 661 residues: Putative DUF21 domain-containing protein At3g13070, chloroplastic (661 aa).

The transit peptide at 1–71 (MMGMALELSV…RSCEFSYRSR (71 aa)) directs the protein to the chloroplast. 5 helical membrane-spanning segments follow: residues 105-125 (GIVIGALVCGVFLYGCQKVLA), 162-182 (GLILAALLSLSAFFSMAETSI), 213-233 (FLTTILIGTTVVNIAATALVT), 239-259 (IFGEAGVSAATGLMTVAILLL), and 285-305 (WLSLVLYPVGRIVTYLSMGIL). A CNNM transmembrane domain is found at 154–340 (VLTVLREQGL…ELSGAIEEEE (187 aa)). CBS domains are found at residues 359–420 (MTPL…LLES) and 426–484 (MAHK…IFDE). Disordered regions lie at residues 559–578 (ESWEEDGEEEEGKQERQEPK) and 628–661 (SSEEDDGNLSNEEDQSENAVLDEHVLADNSKKQQ). 2 stretches are compositionally biased toward acidic residues: residues 560 to 570 (SWEEDGEEEEG) and 630 to 643 (EEDDGNLSNEEDQS). Residues 648–661 (LDEHVLADNSKKQQ) are compositionally biased toward basic and acidic residues.

Its subcellular location is the plastid. It localises to the chloroplast membrane. This Arabidopsis thaliana (Mouse-ear cress) protein is Putative DUF21 domain-containing protein At3g13070, chloroplastic (CBSDUFCH1).